A 737-amino-acid chain; its full sequence is Polyribonucleotide nucleotidyltransferase (737 aa).

Mg(2+) contacts are provided by Asp-489 and Asp-495. The KH domain maps to 556–615; the sequence is PKIDTIKIDVDKIKIVIGKGGETIDKIIAETGVKIDIDEEGNVSIYSSDQDAINRAKEII. Residues 625–693 form the S1 motif domain; it reads DEVYRAKVVR…EKGRIDASMK (69 aa). Residues 691-737 are disordered; the sequence is SMKALLPRPPKPEHDEKGEKSERPHRPRHQKDYKPKKEFTETSKDSE. Residues 700–737 are compositionally biased toward basic and acidic residues; that stretch reads PKPEHDEKGEKSERPHRPRHQKDYKPKKEFTETSKDSE.

It belongs to the polyribonucleotide nucleotidyltransferase family. The cofactor is Mg(2+).

Its subcellular location is the cytoplasm. It catalyses the reaction RNA(n+1) + phosphate = RNA(n) + a ribonucleoside 5'-diphosphate. Involved in mRNA degradation. Catalyzes the phosphorolysis of single-stranded polyribonucleotides processively in the 3'- to 5'-direction. The polypeptide is Polyribonucleotide nucleotidyltransferase (Streptococcus pneumoniae serotype 4 (strain ATCC BAA-334 / TIGR4)).